The chain runs to 125 residues: uncharacterized protein (125 aa).

It belongs to the asfivirus B125R family.

This is an uncharacterized protein from African swine fever virus (isolate Pig/Kenya/KEN-50/1950) (ASFV).